A 245-amino-acid chain; its full sequence is Ribosomal RNA small subunit methyltransferase G (245 aa).

Residues Gly-90, Leu-95, 140 to 141 (AE), and Arg-158 contribute to the S-adenosyl-L-methionine site. Positions 223 to 245 (VVSARRAKPPHPKSARTGKAGTR) are disordered. Basic residues predominate over residues 227 to 245 (RRAKPPHPKSARTGKAGTR).

This sequence belongs to the methyltransferase superfamily. RNA methyltransferase RsmG family.

The protein resides in the cytoplasm. Its function is as follows. Specifically methylates the N7 position of guanine in position 518 of 16S rRNA. This Mycobacterium avium (strain 104) protein is Ribosomal RNA small subunit methyltransferase G.